Here is a 315-residue protein sequence, read N- to C-terminus: p-hydroxyphenylacetate 3-hydroxylase, reductase component (315 aa).

This sequence belongs to the non-flavoprotein flavin reductase family. In terms of assembly, homodimer. The p-hydroxyphenylacetate 3-hydroxylase (HpaH) is composed of an oxygenase component C2 and a reductase component C1.

The enzyme catalyses a reduced flavin + NAD(+) = an oxidized flavin + NADH + 2 H(+). The protein operates within aromatic compound metabolism; 4-hydroxyphenylacetate degradation; pyruvate and succinate semialdehyde from 4-hydroxyphenylacetate: step 1/7. With respect to regulation, flavin concentrations greater than 15 uM do not inhibit the NADH oxidation activity of the reductase component C1 but do affect the hydroxylation activity of the C1-C2 complex. Maximal reductase activity is achieved only upon HPA binding to the reductase component C1 before interaction with NADH. HPA stimulates the rates of both the reduction of FMN and release of reduced FMN from the reductase component. In terms of biological role, reductase component of a two-component system that supplies reduced FMN (FMNH2) to the oxygenase component to catalyze the hydroxylation of 4-hydroxyphenylacetic acid, leading to the production of 3,4-dihydroxyphenylacetate (3,4-DHPA). Catalyzes the reduction of free flavins (FMN, FAD and riboflavin) by NADH. Subsequently, the reduced flavins diffuse to the oxygenase component C2. In Acinetobacter baumannii, this protein is p-hydroxyphenylacetate 3-hydroxylase, reductase component.